A 150-amino-acid polypeptide reads, in one-letter code: Probable cyclase FGR4 (150 aa).

It participates in secondary metabolite biosynthesis. In terms of biological role, probable cyclase; part of the gene cluster that mediates the biosynthesis of the tetraketides fugralins such as linear fugralin A and cyclic fugralin B, volatile compounds that play a role in the asexual reproductive cycle but are not involved in pathogenicity. Fugralin B is similar to fugralin A except for a cyclization between the carboxylic acid C-8 and the alcohol on C-4 resulting in a six membered lactone ring, probably catalyzed by the cyclase FGR4. One of the key features of fugralins is the presence of a double methyl group, which is only rarely encountered in fungal secondary metabolites. As the fugralins cluster does not contain an independent methyltransferase, the PKS FGR1 is probably responsible for adding two methyl groups to the same carbon atom. The exact role of the individual cluster genes remains unknown and further work is needed to unravel the biosynthetic pathway. In Gibberella zeae (strain ATCC MYA-4620 / CBS 123657 / FGSC 9075 / NRRL 31084 / PH-1) (Wheat head blight fungus), this protein is Probable cyclase FGR4.